We begin with the raw amino-acid sequence, 180 residues long: UPF0149 protein XOO1028 (180 aa).

The protein belongs to the UPF0149 family.

The chain is UPF0149 protein XOO1028 from Xanthomonas oryzae pv. oryzae (strain MAFF 311018).